Consider the following 553-residue polypeptide: uncharacterized protein (553 aa).

The next 2 membrane-spanning stretches (helical) occupy residues 6–26 and 524–544; these read IKIFLISLIFISGVYALQVDA and SYWILGIIVVIAIVLVVGYVF.

The protein to M.jannaschii MJ0795 and MJ1506.

Its subcellular location is the cell membrane. This is an uncharacterized protein from Methanocaldococcus jannaschii (strain ATCC 43067 / DSM 2661 / JAL-1 / JCM 10045 / NBRC 100440) (Methanococcus jannaschii).